The following is a 554-amino-acid chain: Hydroxylamine reductase (554 aa).

Positions 3, 6, 18, and 25 each coordinate [2Fe-2S] cluster. Hybrid [4Fe-2O-2S] cluster contacts are provided by H252, E276, C320, C408, C436, C461, E495, and K497. Position 408 is a cysteine persulfide (C408).

This sequence belongs to the HCP family. Requires [2Fe-2S] cluster as cofactor. The cofactor is hybrid [4Fe-2O-2S] cluster.

Its subcellular location is the cytoplasm. The catalysed reaction is A + NH4(+) + H2O = hydroxylamine + AH2 + H(+). Its function is as follows. Catalyzes the reduction of hydroxylamine to form NH(3) and H(2)O. The polypeptide is Hydroxylamine reductase (Shewanella amazonensis (strain ATCC BAA-1098 / SB2B)).